A 350-amino-acid polypeptide reads, in one-letter code: MSKFWSPFVKDLVPYVPGEQPKLTRLVKLNTNENPYGPSPKALAAMQAELNDNLRLYPDPNSDLLKNAVAKYYGVQNNQVFLGNGSDEVLAHIFHGLLQHDQPILFPDISYSFYPVYCGLYGITFDAVPLDAQFRINPADYAKPNGGIIFPNPNAPTGCLLALEAVEQILKGSPDSVVVVDEAYIDFGGETAISLVDRYPNLLVTQTLSKSRSLAGLRVGLAVGHPDLIEALERIKNSFNSYPIDRMANVGAAAAFEDREYFDKTCALVIESREWVVAQLQAKGFEVLPSAANFIFARHPQHDAAGLAAKLREQGVIVRHFKQERIAQFLRISIGTPEQNQALIDGLGEL.

At lysine 210 the chain carries N6-(pyridoxal phosphate)lysine.

The protein belongs to the class-II pyridoxal-phosphate-dependent aminotransferase family. Histidinol-phosphate aminotransferase subfamily. In terms of assembly, homodimer. Requires pyridoxal 5'-phosphate as cofactor.

It catalyses the reaction L-histidinol phosphate + 2-oxoglutarate = 3-(imidazol-4-yl)-2-oxopropyl phosphate + L-glutamate. It functions in the pathway amino-acid biosynthesis; L-histidine biosynthesis; L-histidine from 5-phospho-alpha-D-ribose 1-diphosphate: step 7/9. The protein is Histidinol-phosphate aminotransferase 1 of Pseudomonas fluorescens (strain Pf0-1).